Consider the following 463-residue polypeptide: RuvB-like 2 (463 aa).

Ala2 is modified (N-acetylalanine). Residue Lys9 forms a Glycyl lysine isopeptide (Lys-Gly) (interchain with G-Cter in SUMO2) linkage. Gly77 to Thr84 serves as a coordination point for ATP. At Ser437 the chain carries Phosphoserine. Residues Lys444 and Lys456 each participate in a glycyl lysine isopeptide (Lys-Gly) (interchain with G-Cter in SUMO2) cross-link.

It belongs to the RuvB family. In terms of assembly, forms homohexameric rings. Can form a dodecamer with RUVBL1 made of two stacked hexameric rings; however, even though RUVBL1 and RUVBL2 are present in equimolar ratio, the oligomeric status of each hexamer is not known. Oligomerization may regulate binding to nucleic acids and conversely, binding to nucleic acids may affect the dodecameric assembly. Interaction of the complex with DHX34 results in conformational changes of the N-terminus of the RUVBL2 subunits, resulting in loss of nucleotide binding ability and ATP hydrolysis of the complex. Interacts with the transcriptional activation domain of MYC. Interacts with ATF2. Component of the RNA polymerase II holoenzyme complex. May also act to bridge the LEF1/TCF1-CTNNB1 complex and TBP. Component of the NuA4 histone acetyltransferase complex which contains the catalytic subunit KAT5/TIP60 and the subunits EP400, TRRAP/PAF400, BRD8/SMAP, EPC1, DMAP1/DNMAP1, RUVBL1/TIP49, RUVBL2, ING3, actin, ACTL6A/BAF53A, MORF4L1/MRG15, MORF4L2/MRGX, MRGBP, YEATS4/GAS41, VPS72/YL1 and MEAF6. The NuA4 complex interacts with MYC and the adenovirus E1A protein. RUVBL2 interacts with EP400. Component of a NuA4-related complex which contains EP400, TRRAP/PAF400, SRCAP, BRD8/SMAP, EPC1, DMAP1/DNMAP1, RUVBL1/TIP49, RUVBL2, actin, ACTL6A/BAF53A, VPS72 and YEATS4/GAS41. Interacts with NPAT. Component of the chromatin-remodeling INO80 complex; specifically part of a complex module associated with the helicase ATP-binding and the helicase C-terminal domain of INO80. Component of some MLL1/MLL complex, at least composed of the core components KMT2A/MLL1, ASH2L, HCFC1/HCF1, WDR5 and RBBP5, as well as the facultative components BACC1, CHD8, E2F6, HSP70, INO80C, KANSL1, LAS1L, MAX, MCRS1, MGA, MYST1/MOF, PELP1, PHF20, PRP31, RING2, RUVB1/TIP49A, RUVB2/TIP49B, SENP3, TAF1, TAF4, TAF6, TAF7, TAF9 and TEX10. Interacts with IGHMBP2. Interacts with TELO2. Interacts with HINT1. Component of a SWR1-like complex. Component of the R2TP complex composed at least of RUVBL1, RUVBL2, RPAP3 and PIHD1. Component of the PAQosome complex which is responsible for the biogenesis of several protein complexes and which consists of R2TP complex members RUVBL1, RUVBL2, RPAP3 and PIH1D1, URI complex members PFDN2, PFDN6, PDRG1, UXT and URI1 as well as ASDURF, POLR2E and DNAAF10/WDR92. Interacts with ITFG1. Interacts with ZMYND10. Interacts with WAC; WAC positively regulates MTOR activity by promoting the assembly of the TTT complex composed of TELO2, TTI1 and TTI2 and the RUVBL complex composed of RUVBL1 and RUVBL2 into the TTT-RUVBL complex which leads to the dimerization of the mTORC1 complex and its subsequent activation. Forms a complex with APPL1 and APPL2. Interacts with ZNHIT2 (via HIT-type zinc finger) in the presence of ATP or ADP; shows a stronger interaction in the presence of ADP. The RUVBL1/RUVBL2 complex interacts with ZNHIT1 (via HIT-type zinc finger), ZNHIT3 (via HIT-type zinc finger), ZNHIT6 (via HIT-type zinc finger) and DDX59/ZNHIT5 (via HIT-type zinc finger) in the presence of ADP. Interacts with NOPCHAP1; the interaction is direct and disrupted upon ATP binding. Interacts with SMG1.

It is found in the nucleus matrix. The protein localises to the nucleus. The protein resides in the nucleoplasm. Its subcellular location is the cytoplasm. It localises to the membrane. It is found in the dynein axonemal particle. The enzyme catalyses ATP + H2O = ADP + phosphate + H(+). Possesses single-stranded DNA-stimulated ATPase and ATP-dependent DNA helicase (5' to 3') activity; hexamerization is thought to be critical for ATP hydrolysis and adjacent subunits in the ring-like structure contribute to the ATPase activity. Component of the NuA4 histone acetyltransferase complex which is involved in transcriptional activation of select genes principally by acetylation of nucleosomal histones H4 and H2A. This modification may both alter nucleosome-DNA interactions and promote interaction of the modified histones with other proteins which positively regulate transcription. This complex may be required for the activation of transcriptional programs associated with oncogene and proto-oncogene mediated growth induction, tumor suppressor mediated growth arrest and replicative senescence, apoptosis, and DNA repair. The NuA4 complex ATPase and helicase activities seem to be, at least in part, contributed by the association of RUVBL1 and RUVBL2 with EP400. NuA4 may also play a direct role in DNA repair when recruited to sites of DNA damage. Component of a SWR1-like complex that specifically mediates the removal of histone H2A.Z/H2AZ1 from the nucleosome. Proposed core component of the chromatin remodeling INO80 complex which exhibits DNA- and nucleosome-activated ATPase activity and catalyzes ATP-dependent nucleosome sliding. Plays an essential role in oncogenic transformation by MYC and also modulates transcriptional activation by the LEF1/TCF1-CTNNB1 complex. May also inhibit the transcriptional activity of ATF2. Involved in the endoplasmic reticulum (ER)-associated degradation (ERAD) pathway where it negatively regulates expression of ER stress response genes. May play a role in regulating the composition of the U5 snRNP complex. The protein is RuvB-like 2 (Ruvbl2) of Mus musculus (Mouse).